A 172-amino-acid polypeptide reads, in one-letter code: Large ribosomal subunit protein uL10 (172 aa).

It belongs to the universal ribosomal protein uL10 family. Part of the ribosomal stalk of the 50S ribosomal subunit. The N-terminus interacts with L11 and the large rRNA to form the base of the stalk. The C-terminus forms an elongated spine to which L12 dimers bind in a sequential fashion forming a multimeric L10(L12)X complex.

Forms part of the ribosomal stalk, playing a central role in the interaction of the ribosome with GTP-bound translation factors. The protein is Large ribosomal subunit protein uL10 of Parvibaculum lavamentivorans (strain DS-1 / DSM 13023 / NCIMB 13966).